A 302-amino-acid polypeptide reads, in one-letter code: Proline dehydrogenase 1 (302 aa).

Lys95 contacts substrate. Asp129 is an active-site residue. The FAD site is built by Met130 and Gln158. The active site involves Arg179. Residues 182-184 (KGA) and 221-222 (TH) each bind FAD. Residue 283 to 284 (RR) coordinates substrate.

This sequence belongs to the proline oxidase family. FAD is required as a cofactor.

It carries out the reaction L-proline + a quinone = (S)-1-pyrroline-5-carboxylate + a quinol + H(+). Its pathway is amino-acid degradation; L-proline degradation into L-glutamate; L-glutamate from L-proline: step 1/2. Converts proline to delta-1-pyrroline-5-carboxylate. In Bacillus subtilis subsp. natto, this protein is Proline dehydrogenase 1 (fadM).